Here is a 273-residue protein sequence, read N- to C-terminus: Large ribosomal subunit protein uL2 (273 aa).

Disordered stretches follow at residues 28 to 53 (KPFA…TTRH) and 221 to 273 (RGTA…RRSK). The span at 39 to 48 (KSGGRNNNGR) shows a compositional bias: low complexity.

It belongs to the universal ribosomal protein uL2 family. Part of the 50S ribosomal subunit. Forms a bridge to the 30S subunit in the 70S ribosome.

Its function is as follows. One of the primary rRNA binding proteins. Required for association of the 30S and 50S subunits to form the 70S ribosome, for tRNA binding and peptide bond formation. It has been suggested to have peptidyltransferase activity; this is somewhat controversial. Makes several contacts with the 16S rRNA in the 70S ribosome. The chain is Large ribosomal subunit protein uL2 from Salmonella agona (strain SL483).